A 100-amino-acid polypeptide reads, in one-letter code: Large ribosomal subunit protein uL23 (100 aa).

This sequence belongs to the universal ribosomal protein uL23 family. Part of the 50S ribosomal subunit. Contacts protein L29, and trigger factor when it is bound to the ribosome.

One of the early assembly proteins it binds 23S rRNA. One of the proteins that surrounds the polypeptide exit tunnel on the outside of the ribosome. Forms the main docking site for trigger factor binding to the ribosome. The sequence is that of Large ribosomal subunit protein uL23 from Vibrio cholerae serotype O1 (strain ATCC 39541 / Classical Ogawa 395 / O395).